A 222-amino-acid chain; its full sequence is uncharacterized protein (222 aa).

4 consecutive transmembrane segments (helical) span residues 23–43, 67–87, 157–177, and 187–207; these read FFAA…TGLL, IWVL…IGYL, IVGG…LGNV, and IILG…WHGY.

This sequence belongs to the DedA family.

The protein resides in the cell membrane. This is an uncharacterized protein from Mycobacterium leprae (strain TN).